Consider the following 60-residue polypeptide: Three-finger toxin MS3 (60 aa).

Intrachain disulfides connect Cys-3-Cys-22, Cys-15-Cys-39, Cys-41-Cys-52, and Cys-53-Cys-58.

This sequence belongs to the three-finger toxin family. Short-chain subfamily. Type I alpha-neurotoxin sub-subfamily. As to expression, expressed by the venom gland.

The protein localises to the secreted. In terms of biological role, produces peripheral paralysis by blocking neuromuscular transmission at the postsynaptic site. Binds to and inhibits the endogenous nicotinic acetylcholine receptors (nAChR) in human rhabdomyosarcoma TE 671 cell line with an IC(50) of 346 mM. This neurotoxin is lethal to mice by intraperitoneal injection and to zebrafish by injection at the back of the dorsolateral region. This chain is Three-finger toxin MS3, found in Micrurus surinamensis (Surinam coral snake).